A 219-amino-acid polypeptide reads, in one-letter code: UPF0502 protein HCH_06091 (219 aa).

This sequence belongs to the UPF0502 family.

The chain is UPF0502 protein HCH_06091 from Hahella chejuensis (strain KCTC 2396).